A 276-amino-acid chain; its full sequence is HTH-type transcriptional activator RhaR (276 aa).

The HTH araC/xylS-type domain occupies glutamate 174–arginine 272. DNA-binding regions (H-T-H motif) lie at residues alanine 191–threonine 212 and valine 239–phenylalanine 262.

Binds DNA as a dimer.

It is found in the cytoplasm. In terms of biological role, activates expression of the rhaSR operon in response to L-rhamnose. This Mannheimia succiniciproducens (strain KCTC 0769BP / MBEL55E) protein is HTH-type transcriptional activator RhaR.